Consider the following 434-residue polypeptide: Solute carrier RCH1 (434 aa).

At 1–15 (MKTQYSLIRKIWAHS) the chain is on the cytoplasmic side. A helical transmembrane segment spans residues 16-36 (VTEFLKSQWFFICLAILIVIA). The Extracellular portion of the chain corresponds to 37 to 50 (RFAPNFARDGGLIK). Residues 51-71 (GQYSIGYGCVAWIFLQSGLGM) form a helical membrane-spanning segment. The Cytoplasmic portion of the chain corresponds to 72 to 87 (KSRSLMANMLNWRAHA). Residues 88-108 (TILVLSFLITSSIVYGFCCAV) traverse the membrane as a helical segment. Topologically, residues 109 to 118 (KAANDPKIDD) are extracellular. Residues 119–139 (WVLIGLILTATCPTTVASNVI) form a helical membrane-spanning segment. Residues 140–149 (MTTNAGGNSL) are Cytoplasmic-facing. The helical transmembrane segment at 150-170 (LCVCEVFIGNLLGAFITPALV) threads the bilayer. Topologically, residues 171–199 (QMFTNRAPFAYGNPATGNGIGALYGRVMK) are extracellular. The chain crosses the membrane as a helical span at residues 200 to 220 (QVGLSVFVPLFVGQVIQNCFP). Over 221-234 (KGTAYYLGFLKKYH) the chain is Cytoplasmic. The chain crosses the membrane as a helical span at residues 235-255 (IKIGSYMLLLIMFSSFSTAFY). At 256–264 (QDAFTSVSH) the chain is on the extracellular side. Residues 265–285 (VCIIFLCFFNLGIYIFFTGLS) form a helical membrane-spanning segment. The Cytoplasmic segment spans residues 286–327 (YLCARPWFILKLFPHEPIEGKSTRLYRYSYNIFRPFYYSKED). Residues 328–348 (AICIMFCGPAKTAALGVSLIT) form a helical membrane-spanning segment. Topologically, residues 349–362 (SQYGDKKEHLGKLL) are extracellular. A helical membrane pass occupies residues 363–383 (VPLVLYQVEQVMTANFFVSLF). The Cytoplasmic segment spans residues 384 to 434 (KRWIQKDAQADGSESSCANENEEVDLEKIISIGTGENQSVLSNNVPYTQPR). Phosphoserine is present on serine 425.

The protein belongs to the bile acid:sodium symporter (BASS) (TC 2.A.28) family.

Its subcellular location is the cell membrane. The protein localises to the bud neck. Solute carrier protein that negatively regulates the cytosolic calcium homeostasis in response to high levels of extracellular calcium. This Saccharomyces cerevisiae (strain ATCC 204508 / S288c) (Baker's yeast) protein is Solute carrier RCH1.